The sequence spans 259 residues: Phosphoribosylaminoimidazole-succinocarboxamide synthase (259 aa).

This sequence belongs to the SAICAR synthetase family.

It catalyses the reaction 5-amino-1-(5-phospho-D-ribosyl)imidazole-4-carboxylate + L-aspartate + ATP = (2S)-2-[5-amino-1-(5-phospho-beta-D-ribosyl)imidazole-4-carboxamido]succinate + ADP + phosphate + 2 H(+). Its pathway is purine metabolism; IMP biosynthesis via de novo pathway; 5-amino-1-(5-phospho-D-ribosyl)imidazole-4-carboxamide from 5-amino-1-(5-phospho-D-ribosyl)imidazole-4-carboxylate: step 1/2. In Zymomonas mobilis subsp. mobilis (strain ATCC 31821 / ZM4 / CP4), this protein is Phosphoribosylaminoimidazole-succinocarboxamide synthase.